Reading from the N-terminus, the 257-residue chain is UPF0246 protein AHA_3667 (257 aa).

This sequence belongs to the UPF0246 family.

The protein is UPF0246 protein AHA_3667 of Aeromonas hydrophila subsp. hydrophila (strain ATCC 7966 / DSM 30187 / BCRC 13018 / CCUG 14551 / JCM 1027 / KCTC 2358 / NCIMB 9240 / NCTC 8049).